We begin with the raw amino-acid sequence, 265 residues long: Sulfur carrier protein FdhD (265 aa).

The active-site Cysteine persulfide intermediate is cysteine 107.

It belongs to the FdhD family.

Its subcellular location is the cytoplasm. In terms of biological role, required for formate dehydrogenase (FDH) activity. Acts as a sulfur carrier protein that transfers sulfur from IscS to the molybdenum cofactor prior to its insertion into FDH. The protein is Sulfur carrier protein FdhD of Staphylococcus aureus (strain MRSA252).